The sequence spans 317 residues: Olfactory receptor 6P1 (317 aa).

The Extracellular segment spans residues M1 to L25. N-linked (GlcNAc...) asparagine glycosylation occurs at N3. Residues L26–V46 form a helical membrane-spanning segment. Topologically, residues F47–S54 are cytoplasmic. The helical transmembrane segment at L55 to N75 threads the bilayer. The Extracellular portion of the chain corresponds to V76–T99. C97 and C189 are disulfide-bonded. A helical transmembrane segment spans residues Q100–Y120. Residues D121 to S139 lie on the Cytoplasmic side of the membrane. Residues L140–L160 form a helical membrane-spanning segment. Over L161 to L197 the chain is Extracellular. N186 carries an N-linked (GlcNAc...) asparagine glycan. The chain crosses the membrane as a helical span at residues V198 to S217. Over Y218–A237 the chain is Cytoplasmic. Residues F238–T258 traverse the membrane as a helical segment. At Y259–N271 the chain is on the extracellular side. Residues K272–L292 form a helical membrane-spanning segment. The Cytoplasmic portion of the chain corresponds to R293–D317.

Belongs to the G-protein coupled receptor 1 family.

The protein localises to the cell membrane. In terms of biological role, odorant receptor. This Homo sapiens (Human) protein is Olfactory receptor 6P1 (OR6P1).